A 252-amino-acid chain; its full sequence is Hydroxyacylglutathione hydrolase (252 aa).

The Zn(2+) site is built by histidine 54, histidine 56, aspartate 58, histidine 59, histidine 113, aspartate 132, and histidine 170.

The protein belongs to the metallo-beta-lactamase superfamily. Glyoxalase II family. In terms of assembly, monomer. It depends on Zn(2+) as a cofactor.

It catalyses the reaction an S-(2-hydroxyacyl)glutathione + H2O = a 2-hydroxy carboxylate + glutathione + H(+). It participates in secondary metabolite metabolism; methylglyoxal degradation; (R)-lactate from methylglyoxal: step 2/2. In terms of biological role, thiolesterase that catalyzes the hydrolysis of S-D-lactoyl-glutathione to form glutathione and D-lactic acid. The sequence is that of Hydroxyacylglutathione hydrolase from Synechococcus sp. (strain JA-2-3B'a(2-13)) (Cyanobacteria bacterium Yellowstone B-Prime).